Consider the following 908-residue polypeptide: Translation initiation factor IF-2 (908 aa).

Disordered stretches follow at residues 52 to 229 (QSHG…AEEA) and 241 to 316 (AGQY…SAQH). Residues 65–84 (KSKTTSTARVTGSSGKSKSV) are compositionally biased toward polar residues. 6 stretches are compositionally biased toward basic and acidic residues: residues 94-108 (FEKP…ELAA), 120-138 (AAKD…EERQ), 176-185 (IEVKPKEQPK), 193-229 (PKVE…AEEA), 270-280 (SFEKERREIKR), and 294-303 (KNQDEREIKN). Residues 409-578 (TRPPVVTIMG…SLQAELMELE (170 aa)) form the tr-type G domain. The segment at 418-425 (GHVDHGKT) is G1. A GTP-binding site is contributed by 418-425 (GHVDHGKT). The interval 443–447 (GITQH) is G2. Residues 464–467 (DTPG) form a G3 region. Residues 464–468 (DTPGH) and 518–521 (NKMD) each bind GTP. A G4 region spans residues 518 to 521 (NKMD). The tract at residues 554–556 (SAK) is G5.

Belongs to the TRAFAC class translation factor GTPase superfamily. Classic translation factor GTPase family. IF-2 subfamily.

The protein resides in the cytoplasm. One of the essential components for the initiation of protein synthesis. Protects formylmethionyl-tRNA from spontaneous hydrolysis and promotes its binding to the 30S ribosomal subunits. Also involved in the hydrolysis of GTP during the formation of the 70S ribosomal complex. The protein is Translation initiation factor IF-2 of Psychrobacter arcticus (strain DSM 17307 / VKM B-2377 / 273-4).